Here is a 419-residue protein sequence, read N- to C-terminus: S-adenosylmethionine synthase (419 aa).

H15 serves as a coordination point for ATP. D17 provides a ligand contact to Mg(2+). E43 is a binding site for K(+). Residues E56 and Q100 each coordinate L-methionine. Positions 100–110 (QSPDIAQGVDE) are flexible loop. ATP contacts are provided by residues 171–173 (DGK), 248–249 (KF), D257, 263–264 (RK), A280, and K284. D257 contacts L-methionine. K288 contacts L-methionine.

It belongs to the AdoMet synthase family. Homotetramer; dimer of dimers. The cofactor is Mg(2+). Requires K(+) as cofactor.

It is found in the cytoplasm. The catalysed reaction is L-methionine + ATP + H2O = S-adenosyl-L-methionine + phosphate + diphosphate. It functions in the pathway amino-acid biosynthesis; S-adenosyl-L-methionine biosynthesis; S-adenosyl-L-methionine from L-methionine: step 1/1. Catalyzes the formation of S-adenosylmethionine (AdoMet) from methionine and ATP. The overall synthetic reaction is composed of two sequential steps, AdoMet formation and the subsequent tripolyphosphate hydrolysis which occurs prior to release of AdoMet from the enzyme. The sequence is that of S-adenosylmethionine synthase from Parasynechococcus marenigrum (strain WH8102).